A 198-amino-acid polypeptide reads, in one-letter code: HTH-type transcriptional regulator BetI (198 aa).

Positions 8–68 (PLRRRELIDA…ATMRHLLREL (61 aa)) constitute an HTH tetR-type domain. Positions 31–50 (TVAQIAHEAGVSPALAHHYF) form a DNA-binding region, H-T-H motif.

It participates in amine and polyamine biosynthesis; betaine biosynthesis via choline pathway [regulation]. Its function is as follows. Repressor involved in the biosynthesis of the osmoprotectant glycine betaine. It represses transcription of the choline transporter BetT and the genes of BetAB involved in the synthesis of glycine betaine. This Brucella suis (strain ATCC 23445 / NCTC 10510) protein is HTH-type transcriptional regulator BetI.